The sequence spans 88 residues: Electron transfer flavoprotein regulatory factor 1 (88 aa).

Belongs to the complex I LYR family. In terms of assembly, homotetramer. Interacts with NDUFAB1. Interacts with ETFA. Interacts with ETFB.

Its subcellular location is the mitochondrion. Acts as a regulator of the electron transfer flavoprotein by promoting the removal of flavin from the ETF holoenzyme (composed of ETFA and ETFB). The protein is Electron transfer flavoprotein regulatory factor 1 of Bos taurus (Bovine).